A 638-amino-acid chain; its full sequence is Chaperone protein HtpG (638 aa).

The a; substrate-binding stretch occupies residues 1–345; it reads MTTETFEFQV…AQDLSLNVSR (345 aa). The b stretch occupies residues 346–560; that stretch reads EILQQDRHIR…AGELTPALEN (215 aa). Positions 561–638 are c; sequence MYRAMGQEVP…LMADRLERTL (78 aa).

This sequence belongs to the heat shock protein 90 family. In terms of assembly, homodimer.

The protein localises to the cytoplasm. Its function is as follows. Molecular chaperone. Has ATPase activity. This Streptomyces coelicolor (strain ATCC BAA-471 / A3(2) / M145) protein is Chaperone protein HtpG.